Consider the following 201-residue polypeptide: Dephospho-CoA kinase (201 aa).

The DPCK domain occupies 4–201 (SVGLTGNIAS…KYLREAKIKQ (198 aa)). Residue 12-17 (ASGKST) coordinates ATP.

The protein belongs to the CoaE family.

It localises to the cytoplasm. The catalysed reaction is 3'-dephospho-CoA + ATP = ADP + CoA + H(+). Its pathway is cofactor biosynthesis; coenzyme A biosynthesis; CoA from (R)-pantothenate: step 5/5. In terms of biological role, catalyzes the phosphorylation of the 3'-hydroxyl group of dephosphocoenzyme A to form coenzyme A. The chain is Dephospho-CoA kinase from Legionella pneumophila subsp. pneumophila (strain Philadelphia 1 / ATCC 33152 / DSM 7513).